We begin with the raw amino-acid sequence, 680 residues long: Pescadillo homolog (680 aa).

The tract at residues 310 to 330 (LDQAKDEQTAETTEESSDTID) is disordered. One can recognise a BRCT domain in the interval 351–470 (QAGSLFAPFT…KLVRPDLYSP (120 aa)). Positions 472 to 680 (ATLPPHLSPW…RRKLEKGAAK (209 aa)) are disordered. The stretch at 496–523 (AEQEEEGEAEMAEDSDEEMEEAADEKSK) forms a coiled coil. Acidic residues predominate over residues 497-518 (EQEEEGEAEMAEDSDEEMEEAA). The span at 519–529 (DEKSKTASKDE) shows a compositional bias: basic and acidic residues. Composition is skewed to acidic residues over residues 530–543 (AESESEEDDDDESV) and 551–585 (GTDDDESESESEEEDEDFGGFEDDEAASESEDEEE). The span at 586 to 596 (VARTQHQKELE) shows a compositional bias: basic and acidic residues. Positions 613–680 (ASKKKASQAK…RRKLEKGAAK (68 aa)) form a coiled coil. Residues 616–628 (KKASQAKKIAAKK) show a composition bias toward basic residues. Basic and acidic residues predominate over residues 629–639 (RKEEEEIERQK).

The protein belongs to the pescadillo family. In terms of assembly, component of the NOP7 complex, composed of erb1, nop7 and ytm1. The complex is held together by erb1, which interacts with nop7 via its N-terminal domain and with ytm1 via a high-affinity interaction between the seven-bladed beta-propeller domains of the 2 proteins. The NOP7 complex associates with the 66S pre-ribosome.

It localises to the nucleus. It is found in the nucleolus. Its subcellular location is the nucleoplasm. Functionally, component of the NOP7 complex, which is required for maturation of the 25S and 5.8S ribosomal RNAs and formation of the 60S ribosome. In Aspergillus clavatus (strain ATCC 1007 / CBS 513.65 / DSM 816 / NCTC 3887 / NRRL 1 / QM 1276 / 107), this protein is Pescadillo homolog (nop7).